Consider the following 101-residue polypeptide: NADH-quinone oxidoreductase subunit K (101 aa).

Helical transmembrane passes span 4 to 24 (LAHY…GIFL), 30 to 50 (IIIL…FVAF), and 61 to 81 (IFVF…LAIL).

The protein belongs to the complex I subunit 4L family. NDH-1 is composed of 14 different subunits. Subunits NuoA, H, J, K, L, M, N constitute the membrane sector of the complex.

It is found in the cell inner membrane. It catalyses the reaction a quinone + NADH + 5 H(+)(in) = a quinol + NAD(+) + 4 H(+)(out). Functionally, NDH-1 shuttles electrons from NADH, via FMN and iron-sulfur (Fe-S) centers, to quinones in the respiratory chain. The immediate electron acceptor for the enzyme in this species is believed to be ubiquinone. Couples the redox reaction to proton translocation (for every two electrons transferred, four hydrogen ions are translocated across the cytoplasmic membrane), and thus conserves the redox energy in a proton gradient. This chain is NADH-quinone oxidoreductase subunit K, found in Burkholderia cenocepacia (strain HI2424).